A 104-amino-acid chain; its full sequence is Chitin-binding protein 2 (104 aa).

Oligomer in an unreduced state. Glycosylated.

In terms of biological role, chitin-binding protein. Has antifungal activity against C.krusei, C.albicans, C.tropicalis and C.parapsilosis. Inhibits C.albicans by increasing cell membrane permeability and production of reactive oxygen species. Has no hemagglutinating activity. The polypeptide is Chitin-binding protein 2 (Moringa oleifera (Horseradish tree)).